A 510-amino-acid polypeptide reads, in one-letter code: Serine/threonine protein phosphatase 2A 59 kDa regulatory subunit B' eta isoform (510 aa).

Residues 1-87 (MWKQILSKLP…NNNNNNNNGV (87 aa)) are disordered. The span at 10-19 (PNKKSSKHEH) shows a compositional bias: basic residues. The span at 27 to 42 (HSSSSSHTSGASTSKS) shows a compositional bias: low complexity.

It belongs to the phosphatase 2A regulatory subunit B56 family. In terms of assembly, PP2A consists of a common heteromeric enzyme, composed of a catalytic subunit (subunits C), a constant regulatory subunit (subunit A), and a variety of regulatory subunits such as subunits B (the R2/B/PR55/B55, R3/B''/PR72/PR130/PR59 and R5/B'/B56 families). Interacts with BZR1. Interacts with BRI1.

It is found in the nucleus. The protein resides in the nucleolus. Its subcellular location is the cytoplasm. In terms of biological role, the B regulatory subunit may modulate substrate selectivity and catalytic activity, and may also direct the localization of the catalytic enzyme to a particular subcellular compartment. The holoenzyme composed of PP2AA1, PP2A4 and B'ETA acts as negative regulator of plant innate immunity by controlling BAK1 phosphorylation state and activation in surface-localized immune receptor complexes. Required for the formation of the PP2A holoenzyme that negatively regulates brassinosteroid signaling by dephosphorylating and inactivating BRI1 in the cytoplasm. The protein is Serine/threonine protein phosphatase 2A 59 kDa regulatory subunit B' eta isoform (B'ETA) of Arabidopsis thaliana (Mouse-ear cress).